Reading from the N-terminus, the 439-residue chain is Enolase (439 aa).

Residues H157 and E166 each coordinate substrate. E209 functions as the Proton donor in the catalytic mechanism. 3 residues coordinate Mg(2+): D244, E297, and D324. E297 and D324 together coordinate substrate. K349 functions as the Proton acceptor in the catalytic mechanism. Substrate contacts are provided by residues 376–379 (SHRS) and K400.

The protein belongs to the enolase family. In terms of assembly, homodimer. Mg(2+) is required as a cofactor.

The protein localises to the cytoplasm. It carries out the reaction (2R)-2-phosphoglycerate = phosphoenolpyruvate + H2O. The protein operates within carbohydrate degradation; glycolysis; pyruvate from D-glyceraldehyde 3-phosphate: step 4/5. This chain is Enolase (ENOL), found in Mastigamoeba balamuthi (Phreatamoeba balamuthi).